The chain runs to 98 residues: Co-chaperonin GroES 3 (98 aa).

Belongs to the GroES chaperonin family. Heptamer of 7 subunits arranged in a ring. Interacts with the chaperonin GroEL.

The protein resides in the cytoplasm. In terms of biological role, together with the chaperonin GroEL, plays an essential role in assisting protein folding. The GroEL-GroES system forms a nano-cage that allows encapsulation of the non-native substrate proteins and provides a physical environment optimized to promote and accelerate protein folding. GroES binds to the apical surface of the GroEL ring, thereby capping the opening of the GroEL channel. The sequence is that of Co-chaperonin GroES 3 from Mesorhizobium japonicum (strain LMG 29417 / CECT 9101 / MAFF 303099) (Mesorhizobium loti (strain MAFF 303099)).